The sequence spans 670 residues: MEAKKEIQELYEKLLRHNKKYYQDDSPEITDAEYDSIKDRYLKLLEANPSLGFPVVVGYPASEKFQKVKHLSPMLSLRNIFSEEELVEYIEKTKRFLNLKSALEFLCEPKIDGVSFSARYVNGKLVSCATRGDGKIGENIIDNMKVINGFPIEIMDVPDLLEVRGEVFLDHDTFQTLEGFSNPRNAAAGSLRQLNPEITNERNLQYFAYSASKIDGIEHQEDVLHFLSGRGFMTNPLRLASSKVPEIMSFYDSVYRRRSQIKYDIDGLVYKVNDLKLHARLGTLSDAPRWAIAHKFPSHRAKTILEKIKLSVGRTGIITPVAHLKPITIGGVVISRASLYNEDELERKDIREGDLVIVERAGDVIPKVLEVDISYRTNQERFIFPDKCPSCSSTLIRKNNEAATRCNNSKKCPEQVIQQIKHLVSAQAFDIDGIGTSHISFFIEKGFISEPADIFRLDKHRDEIKKYDGWGEKSVENILKNIKNSRKISLEKFIFSLGIKNIGEKTAYMLAQQFKSFANWFDKMSMLKDDTQTEDEIRNLDGMGSCICESLLDFFSDSDNCNMVKSLSNHVMITDHTVNIGGSLSGKKFVFTGTLLSITREEAKEIIKKAGGIVVNSISKQIDYVVAGEKAGSKLAKANELGIAIIEEKTLIEFTNGNNTPALKKETSSN.

Residues 31-35 (DAEYD), 76-77 (SL), and Glu108 contribute to the NAD(+) site. Residue Lys110 is the N6-AMP-lysine intermediate of the active site. NAD(+) is bound by residues Arg131, Glu166, Lys271, and Lys295. Positions 388, 391, 406, and 412 each coordinate Zn(2+). Residues 579 to 668 (NIGGSLSGKK…NTPALKKETS (90 aa)) enclose the BRCT domain.

It belongs to the NAD-dependent DNA ligase family. LigA subfamily. Mg(2+) is required as a cofactor. Requires Mn(2+) as cofactor.

It carries out the reaction NAD(+) + (deoxyribonucleotide)n-3'-hydroxyl + 5'-phospho-(deoxyribonucleotide)m = (deoxyribonucleotide)n+m + AMP + beta-nicotinamide D-nucleotide.. Functionally, DNA ligase that catalyzes the formation of phosphodiester linkages between 5'-phosphoryl and 3'-hydroxyl groups in double-stranded DNA using NAD as a coenzyme and as the energy source for the reaction. It is essential for DNA replication and repair of damaged DNA. The protein is DNA ligase of Neorickettsia sennetsu (strain ATCC VR-367 / Miyayama) (Ehrlichia sennetsu).